The following is a 1040-amino-acid chain: Multidrug resistance protein MdtB (1040 aa).

The next 12 membrane-spanning stretches (helical) occupy residues 16–36, 347–367, 369–389, 396–416, 440–460, 472–492, 537–557, 863–883, 888–908, 911–931, 968–988, and 998–1018; these read FIMR…AGII, LMMA…NIPA, IIPG…MVFL, LTLM…IVVI, IGFT…PLLF, FAIT…TLTP, WLTL…WVFI, LGST…VLGI, FIHP…ALLA, IAGS…IGIV, ILMT…STGV, and IGMV…TPVI.

Belongs to the resistance-nodulation-cell division (RND) (TC 2.A.6) family. MdtB subfamily. As to quaternary structure, part of a tripartite efflux system composed of MdtA, MdtB and MdtC. MdtB forms a heteromultimer with MdtC.

The protein localises to the cell inner membrane. The MdtABC tripartite complex confers resistance against novobiocin and deoxycholate. This Escherichia coli O9:H4 (strain HS) protein is Multidrug resistance protein MdtB.